The sequence spans 342 residues: S-adenosylmethionine:tRNA ribosyltransferase-isomerase (342 aa).

Belongs to the QueA family. As to quaternary structure, monomer.

The protein localises to the cytoplasm. It carries out the reaction 7-aminomethyl-7-carbaguanosine(34) in tRNA + S-adenosyl-L-methionine = epoxyqueuosine(34) in tRNA + adenine + L-methionine + 2 H(+). The protein operates within tRNA modification; tRNA-queuosine biosynthesis. In terms of biological role, transfers and isomerizes the ribose moiety from AdoMet to the 7-aminomethyl group of 7-deazaguanine (preQ1-tRNA) to give epoxyqueuosine (oQ-tRNA). The sequence is that of S-adenosylmethionine:tRNA ribosyltransferase-isomerase from Bacillus pumilus (strain SAFR-032).